Reading from the N-terminus, the 368-residue chain is Probable ubiquitin receptor RAD23a (368 aa).

Residues 1 to 77 (MKLTVKTLKG…GFLVVMLSKS (77 aa)) form the Ubiquitin-like domain. Over residues 80–111 (ASSAGPSSTQPTSTTTSTISSTTLAAPSTTQS) the composition is skewed to low complexity. The segment at 80–136 (ASSAGPSSTQPTSTTTSTISSTTLAAPSTTQSIAVPASNSTPVQEQPTAQSDTYGQA) is disordered. Positions 116–136 (ASNSTPVQEQPTAQSDTYGQA) are enriched in polar residues. One can recognise a UBA 1 domain in the interval 142–185 (SGSSIEQMVQQIMEMGGGSWDKETVTRALRAAYNNPERAVDYLY). Residues 202-222 (VGSGRELTAPPPSGGPNSSPL) form a disordered region. An STI1 domain is found at 239-282 (GTLEFLRGNDQFQQLRSMVNSNPQILQPMLQELGKQNPQLLRLI). The region spanning 320 to 360 (VTPEEQESIERLEAMGFDRAIVIEAFLSCDRNEELAANYLL) is the UBA 2 domain.

It belongs to the RAD23 family. Interacts with 'Lys-48'-linked polyubiquitin chains. Interacts with RPN10. In terms of tissue distribution, widely expressed in the whole plant.

Its subcellular location is the nucleus. It is found in the cytoplasm. May be involved in nucleotide excision repair. Binds and presumably selects ubiquitin-conjugates for destruction. Prefers multiubiquitin chains rather than single ubiquitins, with a binding affinity for 'Lys-48'-linked ubiquitin chains. Acts as a ubiquitin receptor that associates with the 26S proteasomal docking subunit RPN10 for the indirect recognition of ubiquitinated substrates of ubiquitin/26S proteasome-mediated proteolysis (UPP). Involved in UV tolerance in roots, specifically in dark conditions. The protein is Probable ubiquitin receptor RAD23a of Arabidopsis thaliana (Mouse-ear cress).